The sequence spans 884 residues: Nonsense-mediated mRNA decay factor EBS1 (884 aa).

Disordered regions lie at residues 596 to 645 (NSMK…PTMG) and 755 to 774 (QGGLYSSQQPSSMSSLNSAY). Positions 633–645 (RSSSLDSFSPTMG) are enriched in polar residues. A compositionally biased stretch (low complexity) spans 760–772 (SSQQPSSMSSLNS).

Belongs to the EST1 family. As to quaternary structure, interacts with NMD helicase UPF1. Interacts with CDC33.

It is found in the nucleus. The protein localises to the chromosome. Its subcellular location is the telomere. The protein resides in the cytoplasm. It localises to the P-body. Its function is as follows. Plays a role in nonsense-mediated mRNA decay (NMD). Recruits UPF1 to cytoplasmic mRNA decay bodies (P-bodies). Negative regulator of gene expression. Inhibits translation most likely through effects on eIF-4E (CDC33). Involved in telomere maintenance. The polypeptide is Nonsense-mediated mRNA decay factor EBS1 (Saccharomyces cerevisiae (strain ATCC 204508 / S288c) (Baker's yeast)).